The chain runs to 652 residues: Potassium voltage-gated channel subfamily KQT member 1 (652 aa).

The Cytoplasmic segment spans residues 1–110 (MSSEQPAWTF…YNFLERPTGW (110 aa)). The helical transmembrane segment at 111 to 132 (KCFVYHFTVFLIVLICLIFSVL) threads the bilayer. At 133-143 (STIQQYNNLAT) the chain is on the extracellular side. A helical transmembrane segment spans residues 144 to 166 (ETLFWMEIVLVVFFGAEYVVRLW). The Cytoplasmic portion of the chain corresponds to 167–182 (SAGCRSKYVGVWGRLR). A helical membrane pass occupies residues 183-208 (FARKPISVIDLIVVVASVIVLCVGSN). Topologically, residues 209–216 (GQVFATSA) are extracellular. A helical; Voltage-sensor membrane pass occupies residues 217-232 (IRGIRFLQILRMLHVD). The tract at residues 228–236 (MLHVDRQGG) is interaction with KCNE3. The Cytoplasmic segment spans residues 233 to 250 (RQGGTWRLLGSVVFIHRQ). Q234 provides a ligand contact to a 1,2-diacyl-sn-glycero-3-phospho-(1D-myo-inositol-4,5-bisphosphate). The helical transmembrane segment at 251–273 (ELITTLYIGFLGLIFSSYFVYLA) threads the bilayer. The Extracellular segment spans residues 274–289 (EKDAIDSSGEYQFGSY). Positions 290–310 (ADALWWGVVTVTTIGYGDKVP) form an intramembrane region, pore-forming. Topologically, residues 311–312 (QT) are extracellular. The helical transmembrane segment at 313 to 338 (WIGKTIASCFSVFAISFFALPAGILG) threads the bilayer. Residues 339–652 (SGFALKVQQK…VPRMTQDNIS (314 aa)) are Cytoplasmic-facing. The segment at 360–372 (AAASLIQTAWRCY) is interaction with CALM. The segment at 393–419 (HHLMSPSPKPKKSAMVKKKKIRTERDE) is disordered. Basic residues predominate over residues 401–414 (KPKKSAMVKKKKIR). An interaction with CALM; calcium-dependent region spans residues 504–518 (KVIRRMQYFVAKKKF). The interaction with KCNE1 C-terminus stretch occupies residues 524 to 561 (PYDVRDVIEQYSQGHLNLMVRIKELQRRLDQSLGKPSL). Residues 577 to 605 (IGSRLNRVEDKVTQMDHKLNLITDMLHHL) form an interaction with AKAP9 region. The tract at residues 578 to 609 (GSRLNRVEDKVTQMDHKLNLITDMLHHLLTNQ) is C-terminal assembly domain (tetramerization). The segment at 609 to 652 (QQGSQSIRTPHRSNSLNSENHPSRNTLPTYEQLNVPRMTQDNIS) is disordered.

The protein belongs to the potassium channel family. KQT (TC 1.A.1.15) subfamily. Kv7.1/KCNQ1 sub-subfamily. Tetramer. Heterotetramer with KCNE1; targets to the membrane raft. Interacts (via C-terminus) with CALM; forms a heterotetramer in a calcium-independent manner. Interacts with KCNE2; form a heterooligomer complex that targets to the membrane raft and leading to currents with an apparently instantaneous activation, a rapid deactivation process and a linear current-voltage relationship and decreases the amplitude of the outward current. Interacts with KCNE3; four KCNE3 molecules are bound to one KCNQ1 tetramer (4:4 KCNQ1:KCNE3 stoichiometry); alters membrane raft localization; affects KCNQ1 structure and gating properties. Interacts with KCNE4; impairs KCNQ1 localization in lipid rafts and inhibits voltage-gated potassium channel activity. Interacts with KCNE5; impairs KCNQ1 localization in lipid rafts and only conducts current upon strong and continued depolarization.

The protein localises to the cell membrane. It localises to the cytoplasmic vesicle membrane. The protein resides in the membrane raft. Its subcellular location is the endoplasmic reticulum. It is found in the basolateral cell membrane. The catalysed reaction is K(+)(in) = K(+)(out). Its activity is regulated as follows. PIP2 molecule is essential to activate KCNQ channels by inducing the coupling of the voltage-sensing domain (VSD) and the pore-forming domain (PD). Upon channel activation, PIP2 disrupts the VSD-calmodulin/CALM interactions, causing the release of CALM from the VSD which triggers the opening of the gate. Calcium potentiates KCNQ1 channel current through calcium-bound CALM. Calcium-bound CALM competes with PIP2 to stabilize the channel open state. In terms of biological role, pore-forming subunit of the voltage-gated potassium (Kv) channel involved in the regulation of cardiomyocyte excitability and important in normal development and functions of myocardium, inner ear, stomach and colon. Associates with KCNE beta subunits that modulates current kinetics. Induces a voltage-dependent by rapidly activating and slowly deactivating potassium-selective outward current. Also promotes a delayed voltage activated potassium current showing outward rectification characteristic. During beta-adrenergic receptor stimulation participates in cardiac repolarization by associating with KCNE1 to form the I(Ks) cardiac potassium current that increases the amplitude and slows down the activation kinetics of outward potassium current I(Ks). When associated with KCNE3, forms the potassium channel that is important for cyclic AMP-stimulated intestinal secretion of chloride ions. When associated with KCNE2, forms a heterooligomer complex leading to currents with an apparently instantaneous activation, a rapid deactivation process and a linear current-voltage relationship and decreases the amplitude of the outward current. When associated with KCNE4, inhibits voltage-gated potassium channel activity. When associated with KCNE5, this complex only conducts current upon strong and continued depolarization. The protein is Potassium voltage-gated channel subfamily KQT member 1 of Xenopus laevis (African clawed frog).